Reading from the N-terminus, the 108-residue chain is Nucleoid-associated protein HCH_02614 (108 aa).

The protein belongs to the YbaB/EbfC family. In terms of assembly, homodimer.

It localises to the cytoplasm. Its subcellular location is the nucleoid. In terms of biological role, binds to DNA and alters its conformation. May be involved in regulation of gene expression, nucleoid organization and DNA protection. The polypeptide is Nucleoid-associated protein HCH_02614 (Hahella chejuensis (strain KCTC 2396)).